The primary structure comprises 86 residues: Acyl carrier protein (86 aa).

A Carrier domain is found at 10 to 85 (DKIEQKVIEM…DVIKYIKERQ (76 aa)). Position 45 is an O-(pantetheine 4'-phosphoryl)serine (S45).

The protein belongs to the acyl carrier protein (ACP) family. In terms of processing, 4'-phosphopantetheine is transferred from CoA to a specific serine of apo-ACP by AcpS. This modification is essential for activity because fatty acids are bound in thioester linkage to the sulfhydryl of the prosthetic group.

It is found in the cytoplasm. It participates in lipid metabolism; fatty acid biosynthesis. Carrier of the growing fatty acid chain in fatty acid biosynthesis. The polypeptide is Acyl carrier protein (Rickettsia africae (strain ESF-5)).